The following is a 145-amino-acid chain: Large ribosomal subunit protein bL9 (145 aa).

This sequence belongs to the bacterial ribosomal protein bL9 family.

In terms of biological role, binds to the 23S rRNA. In Ureaplasma urealyticum serovar 10 (strain ATCC 33699 / Western), this protein is Large ribosomal subunit protein bL9.